Here is a 2798-residue protein sequence, read N- to C-terminus: Kinesin-like protein KIN-12F (2798 aa).

The disordered stretch occupies residues 1–165 (MVRDLAAVRR…RPPMSSGQRG (165 aa)). Composition is skewed to low complexity over residues 8–22 (VRRTPARASTSSSAS) and 31–58 (PVDASDAAVVEPEAAAARPPLLAIQPPQ). In terms of domain architecture, Kinesin motor spans 210 to 547 (NVQVVIRVRP…LKFAQRARLI (338 aa)). Residue 291–298 (GQTGSGKT) coordinates ATP. The span at 600–615 (DVDDGTESMNMDEEND) shows a compositional bias: acidic residues. The interval 600–621 (DVDDGTESMNMDEENDNDAHDR) is disordered. Coiled coils occupy residues 792–835 (ELKR…HSSN), 890–987 (LAEE…HRRQ), 1014–1108 (LKRM…VMKE), 1281–1322 (QRAM…LKNE), and 2130–2333 (ELVD…VRQQ). Positions 2338-2359 (PSSGQATSSLEGGMGDFTDSSR) are disordered. Coiled coils occupy residues 2361-2427 (SREI…VKSD) and 2545-2758 (ESKE…LKLK). The interval 2772–2798 (RSESSSLSSGRSRSPSVCRSPSISSFR) is disordered. The span at 2774–2798 (ESSSLSSGRSRSPSVCRSPSISSFR) shows a compositional bias: low complexity.

Belongs to the TRAFAC class myosin-kinesin ATPase superfamily. Kinesin family. KIN-12 subfamily.

In Oryza sativa subsp. japonica (Rice), this protein is Kinesin-like protein KIN-12F.